Consider the following 484-residue polypeptide: MTLRSRLSGEAPQLWLLLLLASTASSLWASVAARTGPLHDKVVVCYVSTWAVYRPEQGAYAIENFDPNLCTHVVYAFAGLDITQAAIKSLDPWQDLKEEYGKGGYEKMTGLKRSHPHLKVSLAIGGWNEGSANYSTLVANNLLRGRFVKQVSSFIRKYNFDGLDLDWEYPTQRKGKPADRENFVLLTKELREEFDEHGLLLTSAIGASKKVIDEAYDVRQISRYLDYLHIMCYDYHGSWDRRVGYNAPLTAPADDPLSVKFSIDYLLKLGAPPEKLVMGLPFYGRTFKTLASGFLNDVSEGVGFKGPYTREDGFLGYNEICQTLSNQTSGWTREWDPQTSQVLAKSERNVFTQEINVVTYDSSRSIANKVLFAMSKRLAGVMVWSVDTDDFLGNCKLDEDTYEDFQKVTAAPKRSSQNYPLLRTINEATMLAVDELAVPEPQPDDSENEIPHGSIADRKNAGASMVSLGLGVTAVFMLLHRLAQ.

The signal sequence occupies residues 1–33 (MTLRSRLSGEAPQLWLLLLLASTASSLWASVAA). Positions 41–432 (KVVVCYVSTW…RTINEATMLA (392 aa)) constitute a GH18 domain. A disulfide bridge links cysteine 45 with cysteine 70. Residues 98–99 (EE) and 125–128 (GGWN) each bind chitin. The Proton donor role is filled by glutamate 168. Chitin-binding positions include tyrosine 169, 231–234 (MCYD), and tryptophan 384. A Phosphoserine modification is found at serine 467.

This sequence belongs to the glycosyl hydrolase 18 family. Chitinase class II subfamily.

It carries out the reaction Random endo-hydrolysis of N-acetyl-beta-D-glucosaminide (1-&gt;4)-beta-linkages in chitin and chitodextrins.. This chain is Probable chitinase 2, found in Drosophila melanogaster (Fruit fly).